Reading from the N-terminus, the 214-residue chain is Ras-like protein rasZ (214 aa).

Position 16 to 23 (16 to 23) interacts with GTP; the sequence is GDGGVGKT. The Effector region signature appears at 38 to 46; that stretch reads YDPTIEDSY. GTP-binding positions include 63-67 and 122-125; these read DTAGQ and NKSD. Cys-211 bears the Cysteine methyl ester mark. Cys-211 carries S-geranylgeranyl cysteine lipidation. Residues 212–214 constitute a propeptide, removed in mature form; the sequence is KMM.

The protein belongs to the small GTPase superfamily. Ras family.

It localises to the cell membrane. It catalyses the reaction GTP + H2O = GDP + phosphate + H(+). Functionally, ras proteins bind GDP/GTP and possess intrinsic GTPase activity. The polypeptide is Ras-like protein rasZ (rasZ) (Dictyostelium discoideum (Social amoeba)).